A 244-amino-acid polypeptide reads, in one-letter code: Maintenance of ploidy protein mob2 (244 aa).

A disordered region spans residues N14–G45. The segment covering S23–S39 has biased composition (low complexity). S46 and S48 each carry phosphoserine.

This sequence belongs to the MOB1/phocein family. Interacts with orb6.

It is found in the cytoplasm. It localises to the cell cortex. Its function is as follows. Required for coordinating polarized cell growth during interphase with the onset of mitosis. The chain is Maintenance of ploidy protein mob2 (mob2) from Schizosaccharomyces pombe (strain 972 / ATCC 24843) (Fission yeast).